The primary structure comprises 232 residues: Sugar fermentation stimulation protein homolog (232 aa).

This sequence belongs to the SfsA family.

The sequence is that of Sugar fermentation stimulation protein homolog from Magnetococcus marinus (strain ATCC BAA-1437 / JCM 17883 / MC-1).